The following is a 463-amino-acid chain: Adenosylhomocysteinase (463 aa).

The substrate site is built by threonine 54, aspartate 129, and glutamate 189. 190–192 (TTT) lines the NAD(+) pocket. Residues lysine 219 and aspartate 223 each coordinate substrate. NAD(+) is bound by residues asparagine 224, 253–258 (GYGDVG), glutamate 276, asparagine 311, 332–334 (IGH), and asparagine 377.

It belongs to the adenosylhomocysteinase family. The cofactor is NAD(+).

The protein resides in the cytoplasm. It carries out the reaction S-adenosyl-L-homocysteine + H2O = L-homocysteine + adenosine. The protein operates within amino-acid biosynthesis; L-homocysteine biosynthesis; L-homocysteine from S-adenosyl-L-homocysteine: step 1/1. May play a key role in the regulation of the intracellular concentration of adenosylhomocysteine. In Caulobacter vibrioides (strain ATCC 19089 / CIP 103742 / CB 15) (Caulobacter crescentus), this protein is Adenosylhomocysteinase.